The chain runs to 690 residues: Calpain-9 (690 aa).

The interval 1–24 (MPYLYRAPGPQAHPVPKDARITHS) is disordered. The Calpain catalytic domain maps to 42–337 (LFEDADFPAS…FDKVEICNLT (296 aa)). The Ca(2+) site is built by L81, G83, and D88. C97 is an active-site residue. Residue E167 participates in Ca(2+) binding. Catalysis depends on residues H254 and N278. Residues E284, D291, L312, D314, and E316 each contribute to the Ca(2+) site. The interval 338 to 521 (PDALEEDAIH…PPDQETEEEQ (184 aa)) is domain III. Residues 498 to 519 (GNVDIDLPEPPKPTPPDQETEE) are disordered. 3 consecutive EF-hand domains span residues 518–552 (EEEQRFRALFEQVAGEDMEVTAEELEYVLNAVLQK), 561–589 (LSLISCKNIISLMDTSGNGKLEFDEFKVF), and 591–626 (DKLKQWINLFLRFDADKSGTMSTYELRTALKAAGFQ). Residues 522 to 690 (RFRALFEQVA…NEFIHLTMNI (169 aa)) are domain IV. The Ca(2+) site is built by D574, S576, N578, K580, E585, D604, D606, S608, T610, and E615.

It belongs to the peptidase C2 family. Expressed predominantly in stomach.

In terms of biological role, calcium-regulated non-lysosomal thiol-protease. The chain is Calpain-9 (CAPN9) from Homo sapiens (Human).